A 404-amino-acid chain; its full sequence is Type II restriction enzyme EcoRII (404 aa).

Residue Y308 is part of the active site.

In terms of assembly, homodimer. Mg(2+) serves as cofactor.

It carries out the reaction Endonucleolytic cleavage of DNA to give specific double-stranded fragments with terminal 5'-phosphates.. Functionally, an E and P subtype restriction enzyme that recognizes the double-stranded sequence 5'-CCWGG-3' and cleaves before C-1. The chain is Type II restriction enzyme EcoRII (ecoRIIR) from Escherichia coli.